The chain runs to 354 residues: D-alanine--D-alanine ligase (354 aa).

One can recognise an ATP-grasp domain in the interval 154-348 (RSWFLTNNIN…FTNLIEEIIK (195 aa)). Residue 181-232 (MKRPYVIKPITQGSSIGIEVIFEEDDFNFANYDFPYGDQVIIEKYIKGRELQ) coordinates ATP. Mg(2+) contacts are provided by Glu301, Glu315, and Asn317.

The protein belongs to the D-alanine--D-alanine ligase family. The cofactor is Mg(2+). Mn(2+) is required as a cofactor.

It is found in the cytoplasm. It catalyses the reaction 2 D-alanine + ATP = D-alanyl-D-alanine + ADP + phosphate + H(+). The protein operates within cell wall biogenesis; peptidoglycan biosynthesis. In terms of biological role, cell wall formation. The polypeptide is D-alanine--D-alanine ligase (Rickettsia canadensis (strain McKiel)).